Here is a 417-residue protein sequence, read N- to C-terminus: Serine hydroxymethyltransferase 3 (417 aa).

Residues Leu-121 and 125–127 (GHL) contribute to the (6S)-5,6,7,8-tetrahydrofolate site. The residue at position 230 (Lys-230) is an N6-(pyridoxal phosphate)lysine. 355 to 357 (SPF) is a (6S)-5,6,7,8-tetrahydrofolate binding site.

It belongs to the SHMT family. In terms of assembly, homodimer. Pyridoxal 5'-phosphate is required as a cofactor.

The protein resides in the cytoplasm. The catalysed reaction is (6R)-5,10-methylene-5,6,7,8-tetrahydrofolate + glycine + H2O = (6S)-5,6,7,8-tetrahydrofolate + L-serine. Its pathway is one-carbon metabolism; tetrahydrofolate interconversion. It functions in the pathway amino-acid biosynthesis; glycine biosynthesis; glycine from L-serine: step 1/1. Catalyzes the reversible interconversion of serine and glycine with tetrahydrofolate (THF) serving as the one-carbon carrier. This reaction serves as the major source of one-carbon groups required for the biosynthesis of purines, thymidylate, methionine, and other important biomolecules. Also exhibits THF-independent aldolase activity toward beta-hydroxyamino acids, producing glycine and aldehydes, via a retro-aldol mechanism. This is Serine hydroxymethyltransferase 3 from Pseudomonas fluorescens (strain Pf0-1).